A 406-amino-acid polypeptide reads, in one-letter code: Elongation factor Tu-A (406 aa).

The 206-residue stretch at 10-215 (KPHVNVGTIG…AIDEYIPTPV (206 aa)) folds into the tr-type G domain. The tract at residues 19–26 (GHVDHGKT) is G1. 19 to 26 (GHVDHGKT) contributes to the GTP binding site. T26 lines the Mg(2+) pocket. Residues 61–65 (GITIN) form a G2 region. Positions 82-85 (DCPG) are G3. Residues 82 to 86 (DCPGH) and 137 to 140 (NKVD) contribute to the GTP site. The tract at residues 137 to 140 (NKVD) is G4. The interval 175 to 177 (SAL) is G5. The residue at position 395 (T395) is a Phosphothreonine.

Belongs to the TRAFAC class translation factor GTPase superfamily. Classic translation factor GTPase family. EF-Tu/EF-1A subfamily. As to quaternary structure, monomer. Binds to the 70S ribosome, contacts tmRNA during trans-translation. Phosphorylated on a threonine.

It is found in the cytoplasm. The catalysed reaction is GTP + H2O = GDP + phosphate + H(+). In terms of biological role, GTP hydrolase that promotes the GTP-dependent binding of aminoacyl-tRNA to the A-site of ribosomes during protein biosynthesis. Functionally, EF-Tu-GDP binds to the acceptor arm of tmRNA by interacting with its acceptor arm, suggesting that GTP hydrolysis by EF-Tu is essential for tmRNA function. Protects glycyl-tRNA(Gly) from hydrolysis by E.coli D-aminoacyl-tRNA deacylase (dtd). The sequence is that of Elongation factor Tu-A from Thermus thermophilus (strain ATCC 27634 / DSM 579 / HB8).